We begin with the raw amino-acid sequence, 273 residues long: Ribosomal RNA small subunit methyltransferase A (273 aa).

S-adenosyl-L-methionine contacts are provided by asparagine 18, leucine 20, glycine 45, glutamate 66, aspartate 91, and asparagine 113.

Belongs to the class I-like SAM-binding methyltransferase superfamily. rRNA adenine N(6)-methyltransferase family. RsmA subfamily.

The protein resides in the cytoplasm. The catalysed reaction is adenosine(1518)/adenosine(1519) in 16S rRNA + 4 S-adenosyl-L-methionine = N(6)-dimethyladenosine(1518)/N(6)-dimethyladenosine(1519) in 16S rRNA + 4 S-adenosyl-L-homocysteine + 4 H(+). Its function is as follows. Specifically dimethylates two adjacent adenosines (A1518 and A1519) in the loop of a conserved hairpin near the 3'-end of 16S rRNA in the 30S particle. May play a critical role in biogenesis of 30S subunits. The protein is Ribosomal RNA small subunit methyltransferase A of Escherichia fergusonii (strain ATCC 35469 / DSM 13698 / CCUG 18766 / IAM 14443 / JCM 21226 / LMG 7866 / NBRC 102419 / NCTC 12128 / CDC 0568-73).